The sequence spans 252 residues: Gastrula zinc finger protein XlCGF28.1 (252 aa).

C2H2-type zinc fingers lie at residues 6 to 28 (FTCN…LRSH), 34 to 56 (FTCS…FRGH), 62 to 84 (SACT…IRSH), 90 to 112 (YTCT…VRSH), 118 to 140 (FKCT…LRFH), 146 to 168 (TTCS…FRVH), 174 to 196 (FTCT…SYLH), 202 to 224 (YTCT…SYLH), and 230 to 252 (FTCT…SHTH).

This sequence belongs to the krueppel C2H2-type zinc-finger protein family.

The protein resides in the nucleus. May be involved in transcriptional regulation. This chain is Gastrula zinc finger protein XlCGF28.1, found in Xenopus laevis (African clawed frog).